The sequence spans 305 residues: E3 ubiquitin-protein ligase RNF115 (305 aa).

Residue Ala-2 is modified to N-acetylalanine. Over residues 100 to 110 (NRANERGHQTH) the composition is skewed to basic and acidic residues. Residues 100–139 (NRANERGHQTHTDFWGPSRPPRLPMTRRYRSRGSTRPDRS) are disordered. Ser-133 is subject to Phosphoserine. Residues 229–270 (CPVCKEDYTVEEKVRQLPCNHFFHSSCIVPWLELHDTCPVCR) form an RING-type zinc finger. The tract at residues 274–305 (NGEDSTRQTQSSEASASNRFSNDSQLHDRWTF) is disordered. Polar residues predominate over residues 280-297 (RQTQSSEASASNRFSNDS).

As to quaternary structure, interacts with RAB7A. Interacts with EGFR and FLT3. Interacts with BST2. Interacts with STX17. Interacts with YWHAE. In terms of processing, phosphorylated by AKT1, allowing association with the 14-3-3 chaperones that facilitates associating with TLRs. Deubiquitinated by USP9X; antogonizing its autoubiquitination and subsequent proteasomal degradation. Post-translationally, RING-type zinc finger-dependent and E2-dependent autoubiquitination.

It is found in the cytoplasm. The protein localises to the cytoplasmic vesicle. Its subcellular location is the phagosome. It localises to the nucleus. The protein resides in the endoplasmic reticulum. It is found in the golgi apparatus. The catalysed reaction is S-ubiquitinyl-[E2 ubiquitin-conjugating enzyme]-L-cysteine + [acceptor protein]-L-lysine = [E2 ubiquitin-conjugating enzyme]-L-cysteine + N(6)-ubiquitinyl-[acceptor protein]-L-lysine.. It functions in the pathway protein modification; protein ubiquitination. E3 ubiquitin-protein ligase that catalyzes the 'Lys-48'- and/or 'Lys-63'-linked polyubiquitination of various substrates and thereby plays a role in a number of signaling pathways including autophagy, innate immunity, cell proliferation and cell death. Plays a role in the endosomal trafficking and degradation of membrane receptors including EGFR, FLT3, MET and CXCR4 through their polyubiquitination. Participates together with BST2 in antiviral immunity by facilitating the internalization of HIV-1 virions into intracellular vesicles leading to their lysosomal degradation. Also possesses an antiviral activity independently of BST2 by promoting retroviral GAG proteins ubiquitination, redistribution to endo-lysosomal compartments and, ultimately, lysosomal degradation. Catalyzes distinct types of ubiquitination on MAVS and STING1 at different phases of viral infection to promote innate antiviral response. Mediates the 'Lys-48'-linked ubiquitination of MAVS leading to its proteasomal degradation and ubiquitinates STING1 via 'Lys-63'-linked polyubiquitination, critical for its oligomerization and the subsequent recruitment of TBK1. Plays a positive role in the autophagosome-lysosome fusion by interacting with STX17 and enhancing its stability without affecting 'Lys-48'- or 'Lys-63'-linked polyubiquitination levels, which in turn promotes autophagosome maturation. Negatively regulates TLR-induced expression of proinflammatory cytokines by catalyzing 'Lys-11'-linked ubiquitination of RAB1A and RAB13 to inhibit post-ER trafficking of TLRs to the Golgi by RAB1A and subsequently from the Golgi apparatus to the cell surface by RAB13. The protein is E3 ubiquitin-protein ligase RNF115 of Mus musculus (Mouse).